Consider the following 626-residue polypeptide: UPF0313 protein MM_1287 (626 aa).

The disordered stretch occupies residues 206–227 (GKGKEKAGEQDESENATEEVAK). Positions 320-589 (ALEMVKFSLT…AMQRALMHYR (270 aa)) constitute a Radical SAM core domain. Residues cysteine 334, cysteine 338, and cysteine 341 each coordinate [4Fe-4S] cluster.

It belongs to the UPF0313 family. It depends on [4Fe-4S] cluster as a cofactor.

The chain is UPF0313 protein MM_1287 from Methanosarcina mazei (strain ATCC BAA-159 / DSM 3647 / Goe1 / Go1 / JCM 11833 / OCM 88) (Methanosarcina frisia).